A 2566-amino-acid chain; its full sequence is Highly reducing polyketide synthase verA (2566 aa).

In terms of domain architecture, Ketosynthase family 3 (KS3) spans 3-440; it reads PEPIAIIGTG…GTNAHAILES (438 aa). The disordered stretch occupies residues 35–61; sequence VASEPPSTRFDNRSFYDPDPSHPGTTN. Basic and acidic residues predominate over residues 44-54; sequence FDNRSFYDPDP. Active-site for beta-ketoacyl synthase activity residues include cysteine 176, histidine 316, and histidine 360. Residues 554 to 880 form a malonyl-CoA:ACP transacylase (MAT) domain region; sequence IFTGQGAQWP…IGLSNRGASG (327 aa). Serine 648 acts as the For malonyltransferase activity in catalysis. Positions 950 to 1081 are N-terminal hotdog fold; sequence HPLLGSLEAD…GKLLICWGNP (132 aa). The dehydratase (DH) domain stretch occupies residues 950 to 1246; it reads HPLLGSLEAD…EGVHISPLGP (297 aa). One can recognise a PKS/mFAS DH domain in the interval 950–1250; it reads HPLLGSLEAD…ISPLGPPDRQ (301 aa). Catalysis depends on histidine 982, which acts as the Proton acceptor; for dehydratase activity. The C-terminal hotdog fold stretch occupies residues 1096–1250; sequence AGAVDIKDFY…ISPLGPPDRQ (155 aa). Residue aspartate 1156 is the Proton donor; for dehydratase activity of the active site. Positions 1386 to 1581 are methyltransferase (CMet) domain; that stretch reads DVLSRFYKED…TGFGGIDTIT (196 aa). A ketoreductase (KR) domain region spans residues 2127-2294; the sequence is KTYLLVGMTG…RRARNIVGSI (168 aa). The 79-residue stretch at 2411–2489 folds into the Carrier domain; the sequence is EAAEIVAAGL…ALTADSVSKL (79 aa). Serine 2449 carries the O-(pantetheine 4'-phosphoryl)serine modification. The tract at residues 2505–2540 is disordered; sequence KDVSGLTSPPEVPSDASRSSVSSGMDEIVTPESPSF. The segment covering 2518–2527 has biased composition (low complexity); it reads SDASRSSVSS.

It depends on pantetheine 4'-phosphate as a cofactor.

It participates in secondary metabolite biosynthesis; terpenoid biosynthesis. The protein operates within mycotoxin biosynthesis. Functionally, highly reducing polyketide synthase (HR-PKS); part of the gene cluster that mediates the biosynthesis of the neurotoxin verrucosidin, a methylated alpha-pyrone polyketide that inhibits oxidative phosphorylation in mitochondria and thereby causes neurological diseases. The carbon backbone of verrucosidin is synthesized by the HR-PKS verA, and further modified by the other verrucodidin cluster enzymes. The chain is Highly reducing polyketide synthase verA from Penicillium polonicum.